Reading from the N-terminus, the 251-residue chain is L-xylulose reductase (251 aa).

13-42 provides a ligand contact to NADP(+); sequence LVTGASQGIGKEICLSLAKAGAQVIAFARN. Ser-143 contributes to the substrate binding site. The Proton acceptor role is filled by Tyr-156. Position 160 (Lys-160) interacts with NADP(+).

This sequence belongs to the short-chain dehydrogenases/reductases (SDR) family. As to quaternary structure, homotetramer. As to expression, expressed in intestine, gonad and spermatids (at protein level). Expressed in intestine, uterine seam, gonadal sheath cells, spermathecal-uterus valve and spermatids.

Its subcellular location is the cell membrane. It carries out the reaction xylitol + NADP(+) = L-xylulose + NADPH + H(+). With respect to regulation, strongly inhibited by 10% dimethyl sulfoxide. Functionally, catalyzes the NADPH-dependent reduction of L-xylulose, D-xylulose, L-(+) erythrulose, D-erythrose, D-threose, L-ribulose, 1,4-dibromo-2,3-butanedione and 2,3-heptanedione. Also active against isatin, 9,10-phenanthrenequinone, menadione, 2,3-hexaenadione and 3,4-hexahenadione. No activity observed when tested using NADH rather than NADPH. The protein is L-xylulose reductase of Caenorhabditis elegans.